Consider the following 378-residue polypeptide: Actin-related protein 2/3 complex subunit 1A (378 aa).

WD repeat units follow at residues 8-47 (RFAE…HWER), 53-92 (KHDQ…WVPT), 97-138 (RLNR…WVSK), 143-182 (RHES…VDTK), 203-242 (LSYS…PLAQ), 257-295 (ISEK…KAAS), and 331-375 (VHDN…QELG).

This sequence belongs to the WD repeat ARPC1 family. As to quaternary structure, component of the Arp2/3 complex composed of ARP2, ARP3, ARPC1/p41-ARC, ARPC2/p34-ARC, ARPC3/p21-ARC, ARPC4/p20-ARC and ARPC5/p16-ARC. Expressed at low levels in all tissues with a relatively highest expression in inflorescences.

Its subcellular location is the cytoplasm. The protein resides in the cytoskeleton. Functions as a component of the Arp2/3 complex which is involved in regulation of actin polymerization and together with an activating nucleation-promoting factor (NPF) mediates the formation of branched actin networks. Arp2/3 complex plays a critical role in the control of cell morphogenesis via the modulation of cell polarity development. The polypeptide is Actin-related protein 2/3 complex subunit 1A (ARPC1A) (Arabidopsis thaliana (Mouse-ear cress)).